A 192-amino-acid chain; its full sequence is uncharacterized protein (192 aa).

This is an uncharacterized protein from Haemophilus influenzae (strain ATCC 51907 / DSM 11121 / KW20 / Rd).